We begin with the raw amino-acid sequence, 460 residues long: Armadillo repeat-containing protein LFR (460 aa).

Residues 1–10 (MSHVRSAPAG) show a composition bias toward low complexity. The disordered stretch occupies residues 1–32 (MSHVRSAPAGKSGGGGGSTPAKRGRPFGSTTG). ARM repeat units lie at residues 225 to 267 (ENET…NLAP), 321 to 360 (NEPFLLPAIPQIYKRLVDLLSVPAVDAQAAAISALYNVAE), and 364 to 405 (DFRL…SLVS).

Interacts with CHR719, SWI3A and SWI3C. As to expression, expressed at low levels in coleoptiles, leaf tongues, mature leaves and nodes during the vegetative phase. Highly expressed in reproductive tissues such as young panicles, early developing seeds, embryos and endosperms.

The protein resides in the nucleus. Plays critical roles in both embryo and endosperm development. Required for free nuclei division and cellularization in early endosperm development, by preventing premature cell death in the endosperm. Involved in the regulation of pattern formation and organ differentiation during embryogenesis, by regulating genes involved in the early stages of seed development. The polypeptide is Armadillo repeat-containing protein LFR (Oryza sativa subsp. japonica (Rice)).